Reading from the N-terminus, the 133-residue chain is Holo-[acyl-carrier-protein] synthase (133 aa).

Mg(2+) contacts are provided by aspartate 8 and glutamate 57.

This sequence belongs to the P-Pant transferase superfamily. AcpS family. Requires Mg(2+) as cofactor.

It localises to the cytoplasm. It catalyses the reaction apo-[ACP] + CoA = holo-[ACP] + adenosine 3',5'-bisphosphate + H(+). Transfers the 4'-phosphopantetheine moiety from coenzyme A to a Ser of acyl-carrier-protein. The chain is Holo-[acyl-carrier-protein] synthase from Caulobacter sp. (strain K31).